Consider the following 312-residue polypeptide: Cytochrome c biogenesis protein CcsA (312 aa).

The next 8 membrane-spanning stretches (helical) occupy residues Asn-12–Phe-32, Ile-47–Phe-67, Leu-72–Phe-92, Leu-98–Leu-118, Met-144–Ile-164, Ile-220–Asn-240, Thr-254–Ile-271, and Ala-281–Leu-301.

It belongs to the CcmF/CycK/Ccl1/NrfE/CcsA family. As to quaternary structure, may interact with Ccs1.

It is found in the plastid. Its subcellular location is the chloroplast thylakoid membrane. In terms of biological role, required during biogenesis of c-type cytochromes (cytochrome c6 and cytochrome f) at the step of heme attachment. This chain is Cytochrome c biogenesis protein CcsA, found in Trieres chinensis (Marine centric diatom).